The sequence spans 144 residues: Cell division protein SepF (144 aa).

The interval 16-42 is disordered; sequence DEMNEAPYTEAEQQEEEVPQAQKNERR.

It belongs to the SepF family. In terms of assembly, homodimer. Interacts with FtsZ.

Its subcellular location is the cytoplasm. In terms of biological role, cell division protein that is part of the divisome complex and is recruited early to the Z-ring. Probably stimulates Z-ring formation, perhaps through the cross-linking of FtsZ protofilaments. Its function overlaps with FtsA. The protein is Cell division protein SepF of Lactobacillus gasseri (strain ATCC 33323 / DSM 20243 / BCRC 14619 / CIP 102991 / JCM 1131 / KCTC 3163 / NCIMB 11718 / NCTC 13722 / AM63).